A 302-amino-acid polypeptide reads, in one-letter code: Succinate--CoA ligase [ADP-forming] subunit alpha (302 aa).

Residues 17-20 (TGST), K43, and 96-98 (ITE) contribute to the CoA site. Residue Y159 coordinates substrate. The Tele-phosphohistidine intermediate role is filled by H247.

Belongs to the succinate/malate CoA ligase alpha subunit family. As to quaternary structure, heterotetramer of two alpha and two beta subunits.

It catalyses the reaction succinate + ATP + CoA = succinyl-CoA + ADP + phosphate. The enzyme catalyses GTP + succinate + CoA = succinyl-CoA + GDP + phosphate. It functions in the pathway carbohydrate metabolism; tricarboxylic acid cycle; succinate from succinyl-CoA (ligase route): step 1/1. Its function is as follows. Succinyl-CoA synthetase functions in the citric acid cycle (TCA), coupling the hydrolysis of succinyl-CoA to the synthesis of either ATP or GTP and thus represents the only step of substrate-level phosphorylation in the TCA. The alpha subunit of the enzyme binds the substrates coenzyme A and phosphate, while succinate binding and nucleotide specificity is provided by the beta subunit. This chain is Succinate--CoA ligase [ADP-forming] subunit alpha, found in Staphylococcus epidermidis (strain ATCC 12228 / FDA PCI 1200).